Here is a 255-residue protein sequence, read N- to C-terminus: Hydroxyacylglutathione hydrolase (255 aa).

Positions 53, 55, 57, 58, 110, 127, and 165 each coordinate Zn(2+).

It belongs to the metallo-beta-lactamase superfamily. Glyoxalase II family. In terms of assembly, monomer. The cofactor is Zn(2+).

It carries out the reaction an S-(2-hydroxyacyl)glutathione + H2O = a 2-hydroxy carboxylate + glutathione + H(+). Its pathway is secondary metabolite metabolism; methylglyoxal degradation; (R)-lactate from methylglyoxal: step 2/2. In terms of biological role, thiolesterase that catalyzes the hydrolysis of S-D-lactoyl-glutathione to form glutathione and D-lactic acid. This chain is Hydroxyacylglutathione hydrolase, found in Xanthomonas euvesicatoria pv. vesicatoria (strain 85-10) (Xanthomonas campestris pv. vesicatoria).